We begin with the raw amino-acid sequence, 368 residues long: Alanine racemase (368 aa).

Residue lysine 34 is the Proton acceptor; specific for D-alanine of the active site. Lysine 34 is subject to N6-(pyridoxal phosphate)lysine. Position 132 (arginine 132) interacts with substrate. Tyrosine 261 acts as the Proton acceptor; specific for L-alanine in catalysis. Methionine 309 lines the substrate pocket.

Belongs to the alanine racemase family. The cofactor is pyridoxal 5'-phosphate.

The enzyme catalyses L-alanine = D-alanine. Its pathway is amino-acid biosynthesis; D-alanine biosynthesis; D-alanine from L-alanine: step 1/1. Its function is as follows. Catalyzes the interconversion of L-alanine and D-alanine. May also act on other amino acids. In Carboxydothermus hydrogenoformans (strain ATCC BAA-161 / DSM 6008 / Z-2901), this protein is Alanine racemase (alr).